Here is a 351-residue protein sequence, read N- to C-terminus: MDQSFGNLGAGAGSSSGGSNSKAAATAVSSSSFLQLPLSTASPAYYGAPLALLHHAAAAPSSSQQHQQQQHHHHYARHGAEMSAAEAEAIKAKIVAHPQYSALLAAYLDCQKVGAPPDVLERLTAMAAKLDASAAGRHEPRDPELDQFMEAYCNMLVKYREELTRPIDEAMEFLKRVEAQLDCISGGGGSSSARLSLADGKSEGVGSSEDDMDPNGRENDPPEIDPRAEDKELKYQLLKKYSGYLSSLRQEFSKKKKKGKLPKEARQKLLHWWELHYKWPYPSETEKIALAESTGLDQKQINNWFINQRKRHWKPSEDMPFVMMEGFHPQNAAALYMDGPFMRDGMYRLGS.

3 disordered regions span residues 1 to 23 (MDQS…NSKA), 57 to 82 (AAAP…GAEM), and 187 to 229 (GGGS…PRAE). Low complexity predominate over residues 57–68 (AAAPSSSQQHQQ). A compositionally biased stretch (basic and acidic residues) spans 214–229 (PNGRENDPPEIDPRAE). An ELK domain is found at 232–252 (ELKYQLLKKYSGYLSSLRQEF). Positions 253 to 316 (SKKKKKGKLP…NQRKRHWKPS (64 aa)) form a DNA-binding region, homeobox; TALE-type.

This sequence belongs to the TALE/KNOX homeobox family.

It localises to the nucleus. Its function is as follows. Plays a possible role in patterning the placement of lateral organs along the axis of the shoot. Mutations in RS1 alters cell fate and causes unregulated cell division and expansion in the leaf. Probably binds to the DNA sequence 5'-TGAC-3'. This is Homeobox protein rough sheath 1 (RS1) from Zea mays (Maize).